Consider the following 589-residue polypeptide: L-fucose isomerase (589 aa).

Active-site proton acceptor residues include E340 and D364. 3 residues coordinate Mn(2+): E340, D364, and H527.

The protein belongs to the L-fucose isomerase family. Mn(2+) is required as a cofactor.

The protein resides in the cytoplasm. It catalyses the reaction L-fucose = L-fuculose. It functions in the pathway carbohydrate degradation; L-fucose degradation; L-lactaldehyde and glycerone phosphate from L-fucose: step 1/3. Its function is as follows. Converts the aldose L-fucose into the corresponding ketose L-fuculose. This Haemophilus influenzae (strain ATCC 51907 / DSM 11121 / KW20 / Rd) protein is L-fucose isomerase.